The chain runs to 141 residues: Large ribosomal subunit protein uL11 (141 aa).

Belongs to the universal ribosomal protein uL11 family. As to quaternary structure, part of the ribosomal stalk of the 50S ribosomal subunit. Interacts with L10 and the large rRNA to form the base of the stalk. L10 forms an elongated spine to which L12 dimers bind in a sequential fashion forming a multimeric L10(L12)X complex. In terms of processing, one or more lysine residues are methylated.

Forms part of the ribosomal stalk which helps the ribosome interact with GTP-bound translation factors. The protein is Large ribosomal subunit protein uL11 of Limosilactobacillus fermentum (strain NBRC 3956 / LMG 18251) (Lactobacillus fermentum).